The following is a 281-amino-acid chain: Very-long-chain (3R)-3-hydroxyacyl-CoA dehydratase 1 (281 aa).

Over Met1–Trp68 the chain is Cytoplasmic. Residues Leu69–Val88 form a helical membrane-spanning segment. Over Arg89–Thr107 the chain is Lumenal. Residues Leu108 to Ile124 form a helical membrane-spanning segment. Residues Gly125 to Thr134 are Cytoplasmic-facing. The helical transmembrane segment at Gly135–Ile152 threads the bilayer. Residues Lys153–Glu158 are Lumenal-facing. The helical transmembrane segment at Glu159–Ile173 threads the bilayer. The Cytoplasmic portion of the chain corresponds to Thr174–Tyr196. A helical membrane pass occupies residues Asn197 to Ile214. Catalysis depends on residues Tyr203 and Glu210. The Lumenal portion of the chain corresponds to Tyr215–Phe244. A glycan (N-linked (GlcNAc...) asparagine) is linked at Asn236. Residues Leu245–His262 form a helical membrane-spanning segment. Residues Met263–Asp281 lie on the Cytoplasmic side of the membrane.

The protein belongs to the very long-chain fatty acids dehydratase HACD family. As to quaternary structure, may interact with enzymes of the ELO family (including ELOVL1); with those enzymes that mediate condensation, the first of the four steps of the reaction cycle responsible for fatty acids elongation, may be part of a larger fatty acids elongase complex. Interacts with TECR. N-glycosylated. In terms of tissue distribution, expressed at high levels in heart, skeletal muscle and testis, weak expression in kidney and liver.

It localises to the endoplasmic reticulum membrane. It catalyses the reaction a very-long-chain (3R)-3-hydroxyacyl-CoA = a very-long-chain (2E)-enoyl-CoA + H2O. It carries out the reaction (3R)-hydroxyhexadecanoyl-CoA = (2E)-hexadecenoyl-CoA + H2O. The enzyme catalyses (3R)-hydroxyoctadecanoyl-CoA = (2E)-octadecenoyl-CoA + H2O. The catalysed reaction is (3R)-hydroxyeicosanoyl-CoA = (2E)-eicosenoyl-CoA + H2O. It catalyses the reaction (3R)-hydroxydocosanoyl-CoA = (2E)-docosenoyl-CoA + H2O. It carries out the reaction (3R)-hydroxytetracosanoyl-CoA = (2E)-tetracosenoyl-CoA + H2O. The enzyme catalyses (3R)-hydroxyhexacosanoyl-CoA = (2E)-hexacosenoyl-CoA + H2O. It participates in lipid metabolism; fatty acid biosynthesis. The chain is Very-long-chain (3R)-3-hydroxyacyl-CoA dehydratase 1 from Mus musculus (Mouse).